The sequence spans 111 residues: MKDPYDVIKRHYVTEKAKTLEGLSLGNGEGKKKGSYCKHPKYTFIVDSNATKPLIAQALESIYADKKVKVKSVNTICVKPQPARMFRGKRKGKTAGFKKAVVTFYEGHSIG.

Belongs to the universal ribosomal protein uL23 family. As to quaternary structure, part of the 50S ribosomal subunit. Contacts protein L29, and trigger factor when it is bound to the ribosome.

One of the early assembly proteins it binds 23S rRNA. One of the proteins that surrounds the polypeptide exit tunnel on the outside of the ribosome. Forms the main docking site for trigger factor binding to the ribosome. The polypeptide is Large ribosomal subunit protein uL23 (Chlamydia abortus (strain DSM 27085 / S26/3) (Chlamydophila abortus)).